A 266-amino-acid polypeptide reads, in one-letter code: Small ribosomal subunit protein uS2 (266 aa).

Residues Glu-238–Glu-266 form a disordered region. The span at Lys-248–Lys-258 shows a compositional bias: basic residues.

Belongs to the universal ribosomal protein uS2 family.

This is Small ribosomal subunit protein uS2 from Xylella fastidiosa (strain M12).